A 121-amino-acid chain; its full sequence is Type II secretion system protein I (121 aa).

Positions 1 to 6 (MNKQKG) are cleaved as a propeptide — leader sequence. N-methylmethionine is present on Met7. A helical membrane pass occupies residues 7–27 (MTLLEVLVALAIFSLAGLTLL).

Belongs to the GSP I family. Type II secretion is composed of four main components: the outer membrane complex, the inner membrane complex, the cytoplasmic secretion ATPase and the periplasm-spanning pseudopilus. Interacts with core component PulG. Interacts with pseudopilins PulJ and PulK. Cleaved by prepilin peptidase. In terms of processing, methylated by prepilin peptidase at the amino group of the N-terminal methionine once the leader sequence is cleaved by prepilin peptidase.

The protein localises to the cell inner membrane. Its function is as follows. Component of the type II secretion system required for the energy-dependent secretion of extracellular factors such as proteases and toxins from the periplasm. Part of the pseudopilus tip complex that is critical for the recognition and binding of secretion substrates. This chain is Type II secretion system protein I (pulI), found in Klebsiella michiganensis (strain ATCC 8724 / DSM 4798 / JCM 20051 / NBRC 3318 / NRRL B-199 / KCTC 1686 / BUCSAV 143 / CCM 1901).